The chain runs to 357 residues: Alanine racemase (357 aa).

Lys-35 functions as the Proton acceptor; specific for D-alanine in the catalytic mechanism. N6-(pyridoxal phosphate)lysine is present on Lys-35. Arg-131 serves as a coordination point for substrate. The active-site Proton acceptor; specific for L-alanine is the Tyr-256. Met-304 contributes to the substrate binding site.

It belongs to the alanine racemase family. Requires pyridoxal 5'-phosphate as cofactor.

The enzyme catalyses L-alanine = D-alanine. Its pathway is amino-acid biosynthesis; D-alanine biosynthesis; D-alanine from L-alanine: step 1/1. Its function is as follows. Catalyzes the interconversion of L-alanine and D-alanine. May also act on other amino acids. The sequence is that of Alanine racemase (alr) from Legionella pneumophila (strain Corby).